The sequence spans 328 residues: MADNTGSEMKSGSFMLEKSAKIFVAGHRGLVGSAIVRKLQDQGFTNLVLRTHSELDLTSQSDVESFFATEKPVYVILAAAKVGGIHANNTYPADFIGVNLQIQTNVIHSAYTHGVKKLLFLGSSCIYPKFAPQPIPESALLTGPLEPTNEWYAIAKIAGIKMCQAYRLQHQWDAISGMPTNLYGQNDNFHPENSHVLPALMRRFHEAKANNADEVVVWGSGSPLREFLHVDDLADACVFLMDQYSGFEHVNVGSGVEVTIKELAELVKEVVGFKGKLVWDTTKPDGTPRKLMDSSKLASLGWTPKISLKDGLSQTYEWYLENVVQKKQ.

Ala-2 carries the post-translational modification N-acetylalanine. Residue 26–32 (GHRGLVG) coordinates NADP(+). Residue Tyr-152 is the Proton donor/acceptor of the active site. Residues Lys-156, 179–182 (PTNL), and His-195 contribute to the NADP(+) site. 4 residues coordinate substrate: Arg-203, Trp-218, Arg-225, and Asp-285.

This sequence belongs to the NAD(P)-dependent epimerase/dehydratase family. Fucose synthase subfamily. In terms of assembly, homodimer.

It catalyses the reaction GDP-beta-L-fucose + NADP(+) = GDP-4-dehydro-alpha-D-rhamnose + NADPH + H(+). The protein operates within nucleotide-sugar biosynthesis; GDP-L-fucose biosynthesis via de novo pathway; GDP-L-fucose from GDP-alpha-D-mannose: step 2/2. Its function is as follows. Catalyzes the two-step NADP-dependent conversion of GDP-4-dehydro-6-deoxy-D-mannose to GDP-fucose, involving an epimerase and a reductase reaction. The sequence is that of Putative GDP-L-fucose synthase 2 (GER2) from Arabidopsis thaliana (Mouse-ear cress).